We begin with the raw amino-acid sequence, 392 residues long: uncharacterized protein (392 aa).

The protein belongs to the hcp1 family.

This is an uncharacterized protein from Escherichia coli (strain K12).